The chain runs to 327 residues: tRNA uridine(34) hydroxylase (327 aa).

A Rhodanese domain is found at 122 to 218 (QENRCLVLDV…YGLKMGTGKW (97 aa)). The Cysteine persulfide intermediate role is filled by Cys-178.

The protein belongs to the TrhO family.

It catalyses the reaction uridine(34) in tRNA + AH2 + O2 = 5-hydroxyuridine(34) in tRNA + A + H2O. In terms of biological role, catalyzes oxygen-dependent 5-hydroxyuridine (ho5U) modification at position 34 in tRNAs. The sequence is that of tRNA uridine(34) hydroxylase from Chlamydia trachomatis serovar A (strain ATCC VR-571B / DSM 19440 / HAR-13).